The following is a 147-amino-acid chain: Nucleoside diphosphate kinase (147 aa).

6 residues coordinate ATP: K9, F57, R85, T91, R102, and N112. The active-site Pros-phosphohistidine intermediate is H115.

The protein belongs to the NDK family. As to quaternary structure, homotetramer. It depends on Mg(2+) as a cofactor.

It localises to the cytoplasm. It carries out the reaction a 2'-deoxyribonucleoside 5'-diphosphate + ATP = a 2'-deoxyribonucleoside 5'-triphosphate + ADP. The catalysed reaction is a ribonucleoside 5'-diphosphate + ATP = a ribonucleoside 5'-triphosphate + ADP. Its function is as follows. Major role in the synthesis of nucleoside triphosphates other than ATP. The ATP gamma phosphate is transferred to the NDP beta phosphate via a ping-pong mechanism, using a phosphorylated active-site intermediate. This chain is Nucleoside diphosphate kinase, found in Thermosipho africanus (strain TCF52B).